The sequence spans 175 residues: MLPPTACSVMSWMLLSCLMLLSQVQGEDSLKNIPSARISCPKGSQAYGSYCYALFQIPQTWFDAELACQKRPGGHLVSVLNSAEASFLSSMVKRTGNSYQYTWIGLHDPTLGAEPNGGGWEWSNNDVMNYFNWERNPSTALDRAFCGSLSRASGFLKWRDMTCEVKLPYVCKFTG.

The signal sequence occupies residues 1–26 (MLPPTACSVMSWMLLSCLMLLSQVQG). Residues 27 to 37 (EDSLKNIPSAR) constitute a propeptide that is removed on maturation. Disulfide bonds link cysteine 40–cysteine 51, cysteine 68–cysteine 171, and cysteine 146–cysteine 163. The 126-residue stretch at 47 to 172 (YGSYCYALFQ…CEVKLPYVCK (126 aa)) folds into the C-type lectin domain. Residue histidine 107 participates in Zn(2+) binding. Positions 114-116 (EPN) match the EPN motif. Residue glutamate 121 participates in Zn(2+) binding.

Forms a hexameric membrane-permeabilizing oligomeric pore on membrane phospholipids. The hexamer is formed by three dimers related by helical symmetry. Forms filaments, filamentation traps pore complexes and limits damage to host cells. Interacts with EXTL3. In terms of processing, proteolytic processing by trypsin removes an inhibitory N-terminal propeptide and is essential for peptidoglycan binding and antibacterial activity. In terms of tissue distribution, constitutively expressed in the small intestine, moderately in colon and at an extremely low level in healthy pancreas.

It is found in the secreted. With respect to regulation, lipopolysaccharide inhibits pore-forming activity, explaining why is bactericidal for Gram-positive but not Gram-negative bacteria. Its function is as follows. Bactericidal C-type lectin which acts against several intestinal Gram-positive and Gram-negative bacteria. Lacks antibacterial activity against S.typhimurium. May play a role in protection against infection with S.enteritidis by inhibiting its translocation from the gut lumen into intestinal tissues and further extraintestinal tissues. Acts as a hormone in response to different stimuli. Secreted by different cell types to activate its receptor EXTL3 and induce cell specific signaling pathways. In pancreas, is able stimulate cell proliferation. This is Regenerating islet-derived protein 3-beta from Mus musculus (Mouse).